Here is a 399-residue protein sequence, read N- to C-terminus: Dual-specificity RNA methyltransferase RlmN (399 aa).

E122 functions as the Proton acceptor in the catalytic mechanism. The region spanning 128–371 (ETDRGTLCVS…VRTPRGRDIL (244 aa)) is the Radical SAM core domain. C135 and C374 form a disulfide bridge. 3 residues coordinate [4Fe-4S] cluster: C142, C146, and C149. Residues 200-201 (GE), S232, 254-256 (SLH), and N331 contribute to the S-adenosyl-L-methionine site. Residue C374 is the S-methylcysteine intermediate of the active site.

This sequence belongs to the radical SAM superfamily. RlmN family. The cofactor is [4Fe-4S] cluster.

The protein localises to the cytoplasm. The catalysed reaction is adenosine(2503) in 23S rRNA + 2 reduced [2Fe-2S]-[ferredoxin] + 2 S-adenosyl-L-methionine = 2-methyladenosine(2503) in 23S rRNA + 5'-deoxyadenosine + L-methionine + 2 oxidized [2Fe-2S]-[ferredoxin] + S-adenosyl-L-homocysteine. It catalyses the reaction adenosine(37) in tRNA + 2 reduced [2Fe-2S]-[ferredoxin] + 2 S-adenosyl-L-methionine = 2-methyladenosine(37) in tRNA + 5'-deoxyadenosine + L-methionine + 2 oxidized [2Fe-2S]-[ferredoxin] + S-adenosyl-L-homocysteine. Its function is as follows. Specifically methylates position 2 of adenine 2503 in 23S rRNA and position 2 of adenine 37 in tRNAs. m2A2503 modification seems to play a crucial role in the proofreading step occurring at the peptidyl transferase center and thus would serve to optimize ribosomal fidelity. The polypeptide is Dual-specificity RNA methyltransferase RlmN (Rhodopseudomonas palustris (strain HaA2)).